The following is a 246-amino-acid chain: Proteolipid protein DM gamma (246 aa).

A run of 4 helical transmembrane segments spans residues 19–35 (LLATILCFSGVALFCGC), 71–87 (VIYGVASFSFLYGIILL), 118–134 (VFLTYLLGIAWLGVFGF), and 206–222 (FIVACAGAGATVIALLI).

It belongs to the myelin proteolipid protein family. In terms of tissue distribution, highly expressed in white matter in myelinating shark brain.

Its subcellular location is the membrane. The protein is Proteolipid protein DM gamma of Squalus acanthias (Spiny dogfish).